The following is an 80-amino-acid chain: RNA-binding protein Hfq (80 aa).

One can recognise a Sm domain in the interval 10–70 (DLFLNTVRKQ…ISTIMPGQPM (61 aa)).

This sequence belongs to the Hfq family. Homohexamer.

Its function is as follows. RNA chaperone that binds small regulatory RNA (sRNAs) and mRNAs to facilitate mRNA translational regulation in response to envelope stress, environmental stress and changes in metabolite concentrations. Also binds with high specificity to tRNAs. This chain is RNA-binding protein Hfq, found in Rhizobium rhizogenes (strain K84 / ATCC BAA-868) (Agrobacterium radiobacter).